Here is a 357-residue protein sequence, read N- to C-terminus: Thiamine thiazole synthase, chloroplastic (357 aa).

Substrate contacts are provided by residues Ala-102, 123-124, Gly-131, and Val-196; that span reads EQ. Cys-233 carries the 2,3-didehydroalanine (Cys) modification. Residues Asp-235, His-250, Met-304, and 314–316 each bind substrate; that span reads RMG.

The protein belongs to the THI4 family. In terms of assembly, homooctamer. Fe cation serves as cofactor. In terms of processing, during the catalytic reaction, a sulfide is transferred from Cys-233 to a reaction intermediate, generating a dehydroalanine residue.

The protein resides in the plastid. Its subcellular location is the chloroplast. It carries out the reaction [ADP-thiazole synthase]-L-cysteine + glycine + NAD(+) = [ADP-thiazole synthase]-dehydroalanine + ADP-5-ethyl-4-methylthiazole-2-carboxylate + nicotinamide + 3 H2O + 2 H(+). Its function is as follows. Involved in biosynthesis of the thiamine precursor thiazole. Catalyzes the conversion of NAD and glycine to adenosine diphosphate 5-(2-hydroxyethyl)-4-methylthiazole-2-carboxylic acid (ADT), an adenylated thiazole intermediate. The reaction includes an iron-dependent sulfide transfer from a conserved cysteine residue of the protein to a thiazole intermediate. The enzyme can only undergo a single turnover, which suggests it is a suicide enzyme. May have additional roles in adaptation to various stress conditions and in DNA damage tolerance. This chain is Thiamine thiazole synthase, chloroplastic, found in Chlamydomonas reinhardtii (Chlamydomonas smithii).